The following is a 138-amino-acid chain: Basic phospholipase A2 homolog promutoxin (138 aa).

The first 16 residues, 1-16 (MRTLWIMAVLLLGVEG), serve as a signal peptide directing secretion. Intrachain disulfides connect C42/C132, C44/C60, C59/C112, C65/C138, C66/C105, C73/C98, and C91/C103. The important for membrane-damaging activities in eukaryotes and bacteria; heparin-binding stretch occupies residues 122–133 (KKHRVTMKFLCK).

The protein belongs to the phospholipase A2 family. Group II subfamily. R49 sub-subfamily. Homodimer; non-covalently linked. In terms of tissue distribution, expressed by the venom gland.

Its subcellular location is the secreted. Snake venom phospholipase A2 homolog that lacks enzymatic activity. Exhibits potent myotoxicity causing myonecrosis and edema in the gastrocnemius muscle of mice. Is also able to stimulate the release of IL12 (IL12A-IL12B), TNF-alpha (TNF), IL6 and IL1-beta (IL1B) from human monocytes, and induce IL2, TNFalpha and IL6 release from T-cells. A model of myotoxic mechanism has been proposed: an apo Lys49-PLA2 is activated by the entrance of a hydrophobic molecule (e.g. fatty acid) at the hydrophobic channel of the protein leading to a reorientation of a monomer. This reorientation causes a transition between 'inactive' to 'active' states, causing alignment of C-terminal and membrane-docking sites (MDoS) side-by-side and putting the membrane-disruption sites (MDiS) in the same plane, exposed to solvent and in a symmetric position for both monomers. The MDoS region stabilizes the toxin on membrane by the interaction of charged residues with phospholipid head groups. Subsequently, the MDiS region destabilizes the membrane with penetration of hydrophobic residues. This insertion causes a disorganization of the membrane, allowing an uncontrolled influx of ions (i.e. calcium and sodium), and eventually triggering irreversible intracellular alterations and cell death. The protein is Basic phospholipase A2 homolog promutoxin of Protobothrops mucrosquamatus (Taiwan habu).